The following is a 100-amino-acid chain: Small ribosomal subunit protein uS14c (100 aa).

Belongs to the universal ribosomal protein uS14 family. Part of the 30S ribosomal subunit.

Its subcellular location is the plastid. It is found in the chloroplast. Binds 16S rRNA, required for the assembly of 30S particles. This is Small ribosomal subunit protein uS14c from Pleurastrum terricola (Filamentous green alga).